The chain runs to 221 residues: uncharacterized protein (221 aa).

4 helical membrane-spanning segments follow: residues 41-63 (TGNI…HSLI), 78-100 (AVMY…SSLS), 141-163 (ILAY…ISFL), and 178-200 (LILR…VNLF).

It localises to the cell membrane. This is an uncharacterized protein from Archaeoglobus fulgidus (strain ATCC 49558 / DSM 4304 / JCM 9628 / NBRC 100126 / VC-16).